The following is a 447-amino-acid chain: MLHRYLPMTEEDKKEMLQTIGVQTIDELFSDIPESVRFKGDLKIKEAKSEPELLKELSQMASKNANLKEYASFLGAGVYDHYAPVIVDHVISRSEFYTAYTPYQPEISQGELQAIFEFQTMICELTGMDVANSSMYDGGTALAEAAMLAAGHTRKKKILVSSAVHPESRAVLETYAKGQNLEVVEINHKDGVTDLDVLQSEVDDTVACVIVQYPNFFGQVEKLADIEKIVHQQKSLFIVSSNPLSLGALTPPGKFGADIVIGDAQPFGIPTQFGGPHCGYFATTKAFMRKIPGRLVGQTVDSDGKRGFVLTLQAREQHIRRDKATSNICSNQALNALAASVAMTALGKQGVKEMARQNISKAQYAKRQFEAKGFTVTFAGPFFNEFVVDCKRPVKEVNDALLQKNIIGGYDLGRDYKEHENHMLVAVTELRTKEEIDTLVNEMGAIQ.

The protein belongs to the GcvP family. N-terminal subunit subfamily. As to quaternary structure, the glycine cleavage system is composed of four proteins: P, T, L and H. In this organism, the P 'protein' is a heterodimer of two subunits.

It carries out the reaction N(6)-[(R)-lipoyl]-L-lysyl-[glycine-cleavage complex H protein] + glycine + H(+) = N(6)-[(R)-S(8)-aminomethyldihydrolipoyl]-L-lysyl-[glycine-cleavage complex H protein] + CO2. The glycine cleavage system catalyzes the degradation of glycine. The P protein binds the alpha-amino group of glycine through its pyridoxal phosphate cofactor; CO(2) is released and the remaining methylamine moiety is then transferred to the lipoamide cofactor of the H protein. The chain is Probable glycine dehydrogenase (decarboxylating) subunit 1 from Bacillus cereus (strain G9842).